The following is a 231-amino-acid chain: Sec-independent protein translocase protein TatB (231 aa).

A helical transmembrane segment spans residues 1-21 (MFDIGFSELLLFGVIALIVLG). Residues 77-168 (MRREMAEMRG…SLKTDFNDNA (92 aa)) are disordered. The span at 101 to 111 (ASRDLVDDAKP) shows a compositional bias: basic and acidic residues. Polar residues predominate over residues 148–157 (SEQPSAQGDN).

The protein belongs to the TatB family. The Tat system comprises two distinct complexes: a TatABC complex, containing multiple copies of TatA, TatB and TatC subunits, and a separate TatA complex, containing only TatA subunits. Substrates initially bind to the TatABC complex, which probably triggers association of the separate TatA complex to form the active translocon.

Its subcellular location is the cell inner membrane. Its function is as follows. Part of the twin-arginine translocation (Tat) system that transports large folded proteins containing a characteristic twin-arginine motif in their signal peptide across membranes. Together with TatC, TatB is part of a receptor directly interacting with Tat signal peptides. TatB may form an oligomeric binding site that transiently accommodates folded Tat precursor proteins before their translocation. The chain is Sec-independent protein translocase protein TatB from Psychrobacter cryohalolentis (strain ATCC BAA-1226 / DSM 17306 / VKM B-2378 / K5).